The sequence spans 248 residues: Ubiquinone biosynthesis O-methyltransferase (248 aa).

S-adenosyl-L-methionine is bound by residues Arg41, Gly72, Asp93, and Met136.

The protein belongs to the methyltransferase superfamily. UbiG/COQ3 family.

The enzyme catalyses a 3-demethylubiquinol + S-adenosyl-L-methionine = a ubiquinol + S-adenosyl-L-homocysteine + H(+). It catalyses the reaction a 3-(all-trans-polyprenyl)benzene-1,2-diol + S-adenosyl-L-methionine = a 2-methoxy-6-(all-trans-polyprenyl)phenol + S-adenosyl-L-homocysteine + H(+). It participates in cofactor biosynthesis; ubiquinone biosynthesis. Functionally, O-methyltransferase that catalyzes the 2 O-methylation steps in the ubiquinone biosynthetic pathway. The chain is Ubiquinone biosynthesis O-methyltransferase from Brucella anthropi (strain ATCC 49188 / DSM 6882 / CCUG 24695 / JCM 21032 / LMG 3331 / NBRC 15819 / NCTC 12168 / Alc 37) (Ochrobactrum anthropi).